The following is a 473-amino-acid chain: Cell division protein FtsP (473 aa).

The tat-type signal signal peptide spans 1 to 27 (MSFSRRQFIQVSGLAMCIGAAPLLVRA).

The protein belongs to the FtsP family. In terms of processing, predicted to be exported by the Tat system. The position of the signal peptide cleavage has not been experimentally proven.

It localises to the periplasm. Functionally, cell division protein that is required for growth during stress conditions. May be involved in protecting or stabilizing the divisomal assembly under conditions of stress. This is Cell division protein FtsP from Photorhabdus laumondii subsp. laumondii (strain DSM 15139 / CIP 105565 / TT01) (Photorhabdus luminescens subsp. laumondii).